The sequence spans 126 residues: Glycine cleavage system H protein (126 aa).

One can recognise a Lipoyl-binding domain in the interval Thr24–Lys105. N6-lipoyllysine is present on Lys65.

The protein belongs to the GcvH family. The glycine cleavage system is composed of four proteins: P, T, L and H. (R)-lipoate is required as a cofactor.

In terms of biological role, the glycine cleavage system catalyzes the degradation of glycine. The H protein shuttles the methylamine group of glycine from the P protein to the T protein. The polypeptide is Glycine cleavage system H protein (Burkholderia cenocepacia (strain HI2424)).